A 181-amino-acid chain; its full sequence is ADP-ribosylation factor 2 (181 aa).

G2 carries N-myristoyl glycine lipidation. GTP is bound by residues 24–31 (GLDAAGKT), 67–71 (DVGGQ), and 126–129 (NKQD).

The protein belongs to the small GTPase superfamily. Arf family.

Its subcellular location is the golgi apparatus. In terms of biological role, GTP-binding protein that functions as an allosteric activator of the cholera toxin catalytic subunit, an ADP-ribosyltransferase. Involved in protein trafficking; may modulate vesicle budding and uncoating within the Golgi apparatus. This chain is ADP-ribosylation factor 2 (ARF2), found in Bos taurus (Bovine).